A 490-amino-acid polypeptide reads, in one-letter code: Ribosome biogenesis protein YTM1 (490 aa).

Positions 1–22 (MDGLEDGPLDASTATSQKPQRQ) are disordered. Residues 23–104 (VRLKLTSRHE…ETTLDVEYVR (82 aa)) are ubiquitin-like (UBL) domain. 7 WD repeats span residues 116–168 (LHDD…IALS), 175–213 (GHTASVKCARMVSPSQIISSGLDRTVRLWKYTESEDGFS), 224–263 (GHKGSVDSISMHAQSHRILSASADHSVGFWSTRKSENPAA), 298–338 (SHTA…LVDT), 340–379 (TASHSLLSVSHMPELSLLASGTSARHITLIDPRASATTVS), 385–425 (GHTN…TDKD), and 449–487 (GEGVKVFDVCWDKSVGIVSSGEDKMIQINRGEGVLPNGG). The disordered stretch occupies residues 255–286 (TRKSENPAAPESLLPSNTSRSSKRRKLNSSVS).

It belongs to the WD repeat WDR12/YTM1 family. In terms of assembly, component of the NOP7 complex, composed of ERB1, NOP7 and YTM1. The complex is held together by ERB1, which interacts with NOP7 via its N-terminal domain and with YTM1 via a high-affinity interaction between the seven-bladed beta-propeller domains of the 2 proteins. The NOP7 complex associates with the 66S pre-ribosome. Interacts (via UBL domain) with MDN1 (via VWFA/MIDAS domain).

It is found in the nucleus. The protein resides in the nucleolus. The protein localises to the nucleoplasm. Its function is as follows. Component of the NOP7 complex, which is required for maturation of the 25S and 5.8S ribosomal RNAs and formation of the 60S ribosome. In Ajellomyces capsulatus (strain NAm1 / WU24) (Darling's disease fungus), this protein is Ribosome biogenesis protein YTM1.